A 194-amino-acid polypeptide reads, in one-letter code: Phosphoprotein p30 (194 aa).

Belongs to the asfivirus phosphoprotein p30 family. Oligomer. Interacts with host HNRNPK. In terms of processing, phosphorylated on serine residues in the 115 N-terminal amino acids.

It is found in the host cytoplasm. The protein resides in the host nucleus. It localises to the virion. Functionally, modifies the subcellular distribution of heterogeneous nuclear ribonucleoprotein K (HNRNPK) and may contribute to modulate HNRNPK functions related to processing and export of mRNAs during ASFV infection. Necessary for virus internalization. In Ornithodoros (relapsing fever ticks), this protein is Phosphoprotein p30.